The chain runs to 341 residues: Putative amino-acid ABC transporter-binding protein YhdW (341 aa).

Positions 1–19 (MKKMMIATLAAASVLLAVA) are cleaved as a signal peptide.

It belongs to the bacterial solute-binding protein 3 family.

It is found in the periplasm. Its function is as follows. Probably part of the binding-protein-dependent transport system YdhWXYZ for an amino acid. This is Putative amino-acid ABC transporter-binding protein YhdW (yhdW) from Escherichia coli O157:H7.